Consider the following 336-residue polypeptide: Flap endonuclease 1 (336 aa).

The segment at 1-98 is N-domain; the sequence is MGADIGDLFE…AEIEERKKRR (98 aa). Residues aspartate 27, aspartate 80, glutamate 151, glutamate 153, aspartate 172, aspartate 174, and aspartate 235 each contribute to the Mg(2+) site. The tract at residues 115 to 256 is I-domain; that stretch reads DAKKYAQAAG…KALNYIKTYG (142 aa). The interval 328 to 336 is interaction with PCNA; sequence TQATLERWF.

The protein belongs to the XPG/RAD2 endonuclease family. FEN1 subfamily. Interacts with PCNA. PCNA stimulates the nuclease activity without altering cleavage specificity. Mg(2+) is required as a cofactor.

Its function is as follows. Structure-specific nuclease with 5'-flap endonuclease and 5'-3' exonuclease activities involved in DNA replication and repair. During DNA replication, cleaves the 5'-overhanging flap structure that is generated by displacement synthesis when DNA polymerase encounters the 5'-end of a downstream Okazaki fragment. Binds the unpaired 3'-DNA end and kinks the DNA to facilitate 5' cleavage specificity. Cleaves one nucleotide into the double-stranded DNA from the junction in flap DNA, leaving a nick for ligation. Also involved in the base excision repair (BER) pathway. Acts as a genome stabilization factor that prevents flaps from equilibrating into structures that lead to duplications and deletions. Also possesses 5'-3' exonuclease activity on nicked or gapped double-stranded DNA. This chain is Flap endonuclease 1, found in Archaeoglobus fulgidus (strain ATCC 49558 / DSM 4304 / JCM 9628 / NBRC 100126 / VC-16).